The primary structure comprises 622 residues: Cilia- and flagella-associated protein 206 (622 aa).

The interval 571–592 is disordered; sequence QVYPPKDTSTQSMREDSTGVPR.

Belongs to the CFAP206 family.

The protein localises to the cytoplasm. It localises to the cytoskeleton. The protein resides in the cilium axoneme. It is found in the cilium basal body. Essential for sperm motility and is involved in the regulation of the beating frequency of motile cilia on the epithelial cells of the respiratory tract. Required for the establishment of radial spokes in sperm flagella. This Macaca fascicularis (Crab-eating macaque) protein is Cilia- and flagella-associated protein 206.